The chain runs to 473 residues: 6-phosphogluconate dehydrogenase, decarboxylating (473 aa).

NADP(+) contacts are provided by residues 10-15 (GMAVMG), 33-35 (NRT), 74-76 (VKS), and N102. Residues N102 and 128–130 (SGG) contribute to the substrate site. K182 functions as the Proton acceptor in the catalytic mechanism. Residue 185 to 186 (HN) coordinates substrate. E189 (proton donor) is an active-site residue. 5 residues coordinate substrate: Y190, K260, R287, R446, and H452.

Belongs to the 6-phosphogluconate dehydrogenase family. In terms of assembly, homodimer.

It carries out the reaction 6-phospho-D-gluconate + NADP(+) = D-ribulose 5-phosphate + CO2 + NADPH. Its pathway is carbohydrate degradation; pentose phosphate pathway; D-ribulose 5-phosphate from D-glucose 6-phosphate (oxidative stage): step 3/3. Catalyzes the oxidative decarboxylation of 6-phosphogluconate to ribulose 5-phosphate and CO(2), with concomitant reduction of NADP to NADPH. This Buchnera aphidicola subsp. Schizaphis graminum (strain Sg) protein is 6-phosphogluconate dehydrogenase, decarboxylating (gnd).